A 245-amino-acid chain; its full sequence is Small ribosomal subunit protein uS2 (245 aa).

The protein belongs to the universal ribosomal protein uS2 family.

The protein is Small ribosomal subunit protein uS2 of Pseudomonas fluorescens (strain Pf0-1).